The sequence spans 347 residues: Phenylalanine--tRNA ligase alpha subunit (347 aa).

Glu265 provides a ligand contact to Mg(2+).

This sequence belongs to the class-II aminoacyl-tRNA synthetase family. Phe-tRNA synthetase alpha subunit type 1 subfamily. As to quaternary structure, tetramer of two alpha and two beta subunits. Requires Mg(2+) as cofactor.

Its subcellular location is the cytoplasm. The enzyme catalyses tRNA(Phe) + L-phenylalanine + ATP = L-phenylalanyl-tRNA(Phe) + AMP + diphosphate + H(+). The polypeptide is Phenylalanine--tRNA ligase alpha subunit (Wolbachia sp. subsp. Drosophila simulans (strain wRi)).